We begin with the raw amino-acid sequence, 194 residues long: MSTEKLKHHKIIFVVGGPGSGKGTQCEKIVHKYGYTHLSTGDLLRAEVSSGSERGKKLQAIMEKGELVPLDTVLDMLRDAMLAKADTSKGFLIDGYPREVKQGEEFEKKIAPPTLLLYVDAGKETMVKRLLKRGETSGRVDDNEETIKKRLETYYKATEPVIAFYKGRGIVRQLNAEGTVDEVFQQVCSYLDKL.

Residue 19–24 participates in ATP binding; that stretch reads GSGKGT. The interval 39 to 68 is NMP; the sequence is STGDLLRAEVSSGSERGKKLQAIMEKGELV. AMP contacts are provided by residues threonine 40, arginine 45, 66 to 68, 95 to 98, and glutamine 102; these read ELV and GYPR. Positions 132–142 are LID; it reads KRGETSGRVDD. Arginine 133 lines the ATP pocket. 2 residues coordinate AMP: arginine 139 and arginine 150. Glycine 178 lines the ATP pocket.

It belongs to the adenylate kinase family. AK1 subfamily. In terms of assembly, monomer. It depends on Mg(2+) as a cofactor. As to expression, skeletal muscle.

It is found in the cytoplasm. The enzyme catalyses a ribonucleoside 5'-phosphate + ATP = a ribonucleoside 5'-diphosphate + ADP. The catalysed reaction is AMP + ATP = 2 ADP. It carries out the reaction dAMP + ATP = dADP + ADP. It catalyses the reaction dATP + AMP = dADP + ADP. The enzyme catalyses dAMP + dATP = 2 dADP. The catalysed reaction is a 2'-deoxyribonucleoside 5'-diphosphate + ATP = a 2'-deoxyribonucleoside 5'-triphosphate + ADP. It carries out the reaction a ribonucleoside 5'-diphosphate + ATP = a ribonucleoside 5'-triphosphate + ADP. It catalyses the reaction CDP + GTP = CTP + GDP. The enzyme catalyses GDP + ATP = GTP + ADP. The catalysed reaction is UDP + ATP = UTP + ADP. It carries out the reaction GTP + UDP = UTP + GDP. It catalyses the reaction dTDP + GTP = dTTP + GDP. The enzyme catalyses dCDP + GTP = dCTP + GDP. The catalysed reaction is dGDP + ATP = dGTP + ADP. It carries out the reaction dADP + GTP = dATP + GDP. It catalyses the reaction thiamine diphosphate + ADP = thiamine triphosphate + AMP. Its function is as follows. Catalyzes the reversible transfer of the terminal phosphate group between ATP and AMP. Also displays broad nucleoside diphosphate kinase activity. Plays an important role in cellular energy homeostasis and in adenine nucleotide metabolism. Also catalyzes at a very low rate the synthesis of thiamine triphosphate (ThTP) from thiamine diphosphate (ThDP) and ADP. This Gallus gallus (Chicken) protein is Adenylate kinase isoenzyme 1.